The primary structure comprises 384 residues: Methylthioribose-1-phosphate isomerase (384 aa).

Aspartate 255 (proton donor) is an active-site residue.

Belongs to the eIF-2B alpha/beta/delta subunits family. MtnA subfamily.

It localises to the cytoplasm. The protein localises to the nucleus. It catalyses the reaction 5-(methylsulfanyl)-alpha-D-ribose 1-phosphate = 5-(methylsulfanyl)-D-ribulose 1-phosphate. It functions in the pathway amino-acid biosynthesis; L-methionine biosynthesis via salvage pathway; L-methionine from S-methyl-5-thio-alpha-D-ribose 1-phosphate: step 1/6. Catalyzes the interconversion of methylthioribose-1-phosphate (MTR-1-P) into methylthioribulose-1-phosphate (MTRu-1-P). This chain is Methylthioribose-1-phosphate isomerase (mri1), found in Talaromyces stipitatus (strain ATCC 10500 / CBS 375.48 / QM 6759 / NRRL 1006) (Penicillium stipitatum).